The sequence spans 391 residues: Histamine H4 receptor (391 aa).

Residues Met1–Ala19 lie on the Extracellular side of the membrane. N-linked (GlcNAc...) asparagine glycosylation occurs at Asn5. A helical membrane pass occupies residues Phe20–Phe40. The Cytoplasmic segment spans residues Val41–Tyr52. The chain crosses the membrane as a helical span at residues Phe53 to Ile73. Topologically, residues Pro74–Cys87 are extracellular. A disulfide bridge links Cys87 with Cys166. A helical membrane pass occupies residues Met88 to Ile108. Over Ser109–Lys131 the chain is Cytoplasmic. A helical membrane pass occupies residues Ile132–Leu152. Topologically, residues Ala153–Trp174 are extracellular. The N-linked (GlcNAc...) asparagine glycan is linked to Asn159. The helical transmembrane segment at Tyr175 to Phe195 threads the bilayer. Topologically, residues Asn196–Ser306 are cytoplasmic. Residues Thr238–Lys258 are disordered. Residues Ala247–Arg256 show a composition bias toward basic and acidic residues. Residues Leu307 to Val327 traverse the membrane as a helical segment. Over Leu328–Ser343 the chain is Extracellular. The chain crosses the membrane as a helical span at residues Ile344–His364. Over Arg365 to Ser391 the chain is Cytoplasmic.

This sequence belongs to the G-protein coupled receptor 1 family. As to quaternary structure, interacts with TSPAN4.

The protein resides in the cell membrane. Its function is as follows. The H4 subclass of histamine receptors could mediate the histamine signals in peripheral tissues. Displays a significant level of constitutive activity (spontaneous activity in the absence of agonist). The polypeptide is Histamine H4 receptor (Hrh4) (Mus musculus (Mouse)).